Here is a 43-residue protein sequence, read N- to C-terminus: METATLVAIFISCLLVSFTGYAPYTASGQPSNELRDLFEEHED.

A helical transmembrane segment spans residues Thr5–Ser27.

The protein belongs to the PsbN family.

Its subcellular location is the plastid. The protein localises to the chloroplast thylakoid membrane. May play a role in photosystem I and II biogenesis. The protein is Protein PsbN of Anthoceros angustus (Hornwort).